We begin with the raw amino-acid sequence, 462 residues long: ATP synthase subunit beta (462 aa).

152–159 (GGAGVGKT) contributes to the ATP binding site.

Belongs to the ATPase alpha/beta chains family. F-type ATPases have 2 components, CF(1) - the catalytic core - and CF(0) - the membrane proton channel. CF(1) has five subunits: alpha(3), beta(3), gamma(1), delta(1), epsilon(1). CF(0) has three main subunits: a(1), b(2) and c(9-12). The alpha and beta chains form an alternating ring which encloses part of the gamma chain. CF(1) is attached to CF(0) by a central stalk formed by the gamma and epsilon chains, while a peripheral stalk is formed by the delta and b chains.

The protein resides in the cell inner membrane. The catalysed reaction is ATP + H2O + 4 H(+)(in) = ADP + phosphate + 5 H(+)(out). Functionally, produces ATP from ADP in the presence of a proton gradient across the membrane. The catalytic sites are hosted primarily by the beta subunits. In Shewanella amazonensis (strain ATCC BAA-1098 / SB2B), this protein is ATP synthase subunit beta.